The primary structure comprises 427 residues: 3-phosphoshikimate 1-carboxyvinyltransferase (427 aa).

Positions 20, 21, and 25 each coordinate 3-phosphoshikimate. Position 20 (K20) interacts with phosphoenolpyruvate. Phosphoenolpyruvate contacts are provided by G92 and R120. 3-phosphoshikimate-binding residues include S166, Q168, D312, and K339. Position 168 (Q168) interacts with phosphoenolpyruvate. D312 acts as the Proton acceptor in catalysis. Phosphoenolpyruvate contacts are provided by R343 and R385.

The protein belongs to the EPSP synthase family. In terms of assembly, monomer.

Its subcellular location is the cytoplasm. The enzyme catalyses 3-phosphoshikimate + phosphoenolpyruvate = 5-O-(1-carboxyvinyl)-3-phosphoshikimate + phosphate. It functions in the pathway metabolic intermediate biosynthesis; chorismate biosynthesis; chorismate from D-erythrose 4-phosphate and phosphoenolpyruvate: step 6/7. Its function is as follows. Catalyzes the transfer of the enolpyruvyl moiety of phosphoenolpyruvate (PEP) to the 5-hydroxyl of shikimate-3-phosphate (S3P) to produce enolpyruvyl shikimate-3-phosphate and inorganic phosphate. The sequence is that of 3-phosphoshikimate 1-carboxyvinyltransferase from Streptococcus gordonii (strain Challis / ATCC 35105 / BCRC 15272 / CH1 / DL1 / V288).